Consider the following 211-residue polypeptide: Transcription antitermination protein NusB (211 aa).

This sequence belongs to the NusB family.

Involved in transcription antitermination. Required for transcription of ribosomal RNA (rRNA) genes. Binds specifically to the boxA antiterminator sequence of the ribosomal RNA (rrn) operons. This chain is Transcription antitermination protein NusB, found in Gloeobacter violaceus (strain ATCC 29082 / PCC 7421).